Consider the following 911-residue polypeptide: Alpha-actinin-4 (911 aa).

The segment at 1-269 (MVDYHAANQA…YVSSFYHAFS (269 aa)) is actin-binding. The interval 12 to 26 (QYGPSSGGNGTGGGG) is interaction with VCL. The disordered stretch occupies residues 12 to 31 (QYGPSSGGNGTGGGGGMGDY). A compositionally biased stretch (gly residues) spans 16–29 (SSGGNGTGGGGGMG). Tyrosine 31 carries the phosphotyrosine modification. The interval 40–61 (RDLLLDPAWEKQQRKTFTAWCN) is interaction with VCL. 2 consecutive Calponin-homology (CH) domains span residues 50–154 (KQQR…LRFA) and 163–269 (TSAK…HAFS). The LXXLL motif motif lies at 84 to 88 (LMLLL). Residues 108–126 (KINNVNKALDFIASKGVKL) form an interaction with VCL region. Lysine 114 is subject to N6-acetyllysine. The polyphosphoinositide (PIP2)-binding stretch occupies residues 177–192 (TAPYKNVNVQNFHISW). The residue at position 214 (lysine 214) is an N6-acetyllysine. Residue threonine 249 is modified to Phosphothreonine. Spectrin repeat units lie at residues 293-403 (HLME…WLLN), 413-518 (HLAE…ALEK), 528-639 (QLHL…ALLE), and 649-752 (HLRR…EVEN). Lysine 592 and lysine 625 each carry N6-acetyllysine. Serine 696 is modified (phosphoserine). The interval 736 to 911 (WEQLLTTIAR…STALYGESDL (176 aa)) is mediates interaction with MICALL2. 2 EF-hand domains span residues 765–800 (EQMQ…LGYD) and 806–841 (QGDA…ETTD). Aspartate 778 is a binding site for Ca(2+). Lysine 779 is modified (N6-acetyllysine). Ca(2+)-binding residues include aspartate 780 and glutamate 789. At lysine 859 the chain carries N6-acetyllysine. Serine 909 carries the post-translational modification Phosphoserine.

This sequence belongs to the alpha-actinin family. As to quaternary structure, homodimer; antiparallel. Interacts with MAGI1. Interacts with MICALL2 (preferentially in opened conformation); stimulated by RAB13 activation. Identified in a IGF2BP1-dependent mRNP granule complex containing untranslated mRNAs. Component of the CART complex, at least composed of ACTN4, HGS/HRS, MYO5B and TRIM3. Binds TRIM3 at the N-terminus. Interacts with PDLIM2. Identified in a complex with CASK, IQGAP1, MAGI2, NPHS1, SPTAN1 and SPTBN1. Interacts with PPARG and RARA. Binds to VCL; this interaction triggers VCL conformational changes. Interacts with SEPTIN14. Interacts with IGSF8. As to expression, expressed in the foot process layer of podocytes in the kidney glomerulus but not in tubules (at protein level).

The protein resides in the nucleus. Its subcellular location is the cytoplasm. It localises to the cell junction. It is found in the cytoskeleton. The protein localises to the stress fiber. The protein resides in the perinuclear region. Its function is as follows. F-actin cross-linking protein which is thought to anchor actin to a variety of intracellular structures. This is a bundling protein. Probably involved in vesicular trafficking via its association with the CART complex. The CART complex is necessary for efficient transferrin receptor recycling but not for EGFR degradation. Involved in tight junction assembly in epithelial cells probably through interaction with MICALL2. Links MICALL2 to the actin cytoskeleton and recruits it to the tight junctions. May also function as a transcriptional coactivator, stimulating transcription mediated by the nuclear hormone receptors PPARG and RARA. Association with IGSF8 regulates the immune synapse formation and is required for efficient T-cell activation. This Rattus norvegicus (Rat) protein is Alpha-actinin-4.